The primary structure comprises 762 residues: Cellulose synthase-like protein H2 (762 aa).

Over residues 1-15 (MAVVAAAAATGSTTR) the composition is skewed to low complexity. Residues 1–39 (MAVVAAAAATGSTTRSGGGGGEGTRSGRKKPPPPPLQER) form a disordered region. 2 helical membrane passes run 47–67 (AWAW…LLAL) and 81–101 (GVWR…ALNV). Residues D180 and D470 contribute to the active site. The next 6 helical transmembrane spans lie at 541–561 (LAYL…CYGL), 582–602 (FSVP…EYMA), 619–639 (IISV…SLGL), 673–693 (LPVF…VTVG), 708–728 (APGI…FPFV), and 739–759 (GIPW…VTFC).

The protein belongs to the glycosyltransferase 2 family. Plant cellulose synthase-like H subfamily.

It localises to the golgi apparatus membrane. Its function is as follows. Thought to be a Golgi-localized beta-glycan synthase that polymerize the backbones of noncellulosic polysaccharides (hemicelluloses) of plant cell wall. The chain is Cellulose synthase-like protein H2 (CSLH2) from Oryza sativa subsp. indica (Rice).